The following is a 328-amino-acid chain: UPF0194 membrane protein YE2891 (328 aa).

A signal peptide spans 1 to 22; that stretch reads MNRKKIIVAVVIVALLAAIGYG. Coiled-coil stretches lie at residues 80-109 and 139-208; these read YVNA…REEE and ANKA…TTLL.

The protein belongs to the UPF0194 family.

It localises to the periplasm. The polypeptide is UPF0194 membrane protein YE2891 (Yersinia enterocolitica serotype O:8 / biotype 1B (strain NCTC 13174 / 8081)).